Reading from the N-terminus, the 193-residue chain is Dual-action ribosomal maturation protein DarP (193 aa).

Over residues 1–10 the composition is skewed to basic and acidic residues; that stretch reads MRGRDEDTGE. 2 disordered regions span residues 1 to 20 and 170 to 193; these read MRGRDEDTGEFRGASRSQQR and SQKPGLESGDAGLEDEESASENDE. The span at 181 to 193 shows a compositional bias: acidic residues; it reads GLEDEESASENDE.

Belongs to the DarP family.

Its subcellular location is the cytoplasm. Functionally, member of a network of 50S ribosomal subunit biogenesis factors which assembles along the 30S-50S interface, preventing incorrect 23S rRNA structures from forming. Promotes peptidyl transferase center (PTC) maturation. This is Dual-action ribosomal maturation protein DarP from Xanthomonas campestris pv. campestris (strain 8004).